A 540-amino-acid chain; its full sequence is Collagen alpha-1(XXIII) chain (540 aa).

The span at 1–26 (MGPGERAGGGGDAGKGNAAGGGGGGR) shows a compositional bias: gly residues. The interval 1–28 (MGPGERAGGGGDAGKGNAAGGGGGGRSA) is disordered. At 1 to 34 (MGPGERAGGGGDAGKGNAAGGGGGGRSATTAGSR) the chain is on the cytoplasmic side. Residues 35–56 (AVSALCLLLSVGSAAACLLLGV) traverse the membrane as a helical; Signal-anchor for type II membrane protein segment. Residues 57–540 (QAAALQGRVA…GLPVPGCWHK (484 aa)) lie on the Extracellular side of the membrane. 2 disordered regions span residues 109–304 (AREA…GEQG) and 316–540 (LDAL…CWHK). 5 Collagen-like domains span residues 124 to 243 (GRRG…PGKK), 251 to 305 (QPGP…EQGD), 321 to 380 (GPPG…MGLS), 412 to 460 (GPPG…GPPG), and 463 to 522 (GLPG…PGLD). Low complexity-rich tracts occupy residues 140 to 156 (QSGRDGYPGPLGLDGKP) and 168 to 183 (PGDFGPRGDQGQDGAA). The span at 185 to 195 (PPGPPGPPGAR) shows a compositional bias: pro residues. The segment covering 322 to 334 (PPGPQGPPGPPGI) has biased composition (pro residues). Residues 350 to 362 (DGEKGPKGQKGDP) are compositionally biased toward basic and acidic residues. A compositionally biased stretch (pro residues) spans 411-422 (PGPPGPPGPPGP). Basic and acidic residues-rich tracts occupy residues 435–444 (DGAKGEKGAS) and 486–503 (RGEKGDRSERGEKGERGV).

Homotrimer. In terms of processing, undergoes proteolytic cleavage by furin protease to yield a 60 kDa soluble form that forms a homotrimer and exhibits a low affinity interaction with heparin.

It localises to the cell membrane. The sequence is that of Collagen alpha-1(XXIII) chain (COL23A1) from Homo sapiens (Human).